The sequence spans 921 residues: Isoleucine--tRNA ligase (921 aa).

The 'HIGH' region motif lies at 57–67; the sequence is PYANGDIHMGH. Residue glutamate 552 participates in L-isoleucyl-5'-AMP binding. The short motif at 593 to 597 is the 'KMSKS' region element; it reads KMSKS. An ATP-binding site is contributed by lysine 596. Zn(2+)-binding residues include cysteine 888, cysteine 891, cysteine 908, and cysteine 911.

It belongs to the class-I aminoacyl-tRNA synthetase family. IleS type 1 subfamily. Monomer. Requires Zn(2+) as cofactor.

The protein localises to the cytoplasm. The catalysed reaction is tRNA(Ile) + L-isoleucine + ATP = L-isoleucyl-tRNA(Ile) + AMP + diphosphate. In terms of biological role, catalyzes the attachment of isoleucine to tRNA(Ile). As IleRS can inadvertently accommodate and process structurally similar amino acids such as valine, to avoid such errors it has two additional distinct tRNA(Ile)-dependent editing activities. One activity is designated as 'pretransfer' editing and involves the hydrolysis of activated Val-AMP. The other activity is designated 'posttransfer' editing and involves deacylation of mischarged Val-tRNA(Ile). The polypeptide is Isoleucine--tRNA ligase (Bacillus cytotoxicus (strain DSM 22905 / CIP 110041 / 391-98 / NVH 391-98)).